Here is a 178-residue protein sequence, read N- to C-terminus: Large ribosomal subunit protein uL6 (178 aa).

It belongs to the universal ribosomal protein uL6 family. Part of the 50S ribosomal subunit.

This protein binds to the 23S rRNA, and is important in its secondary structure. It is located near the subunit interface in the base of the L7/L12 stalk, and near the tRNA binding site of the peptidyltransferase center. The polypeptide is Large ribosomal subunit protein uL6 (Corynebacterium glutamicum (strain R)).